We begin with the raw amino-acid sequence, 238 residues long: tRNA (guanine-N(7)-)-methyltransferase (238 aa).

S-adenosyl-L-methionine-binding residues include glutamate 62, glutamate 87, aspartate 119, and aspartate 141. Aspartate 141 is an active-site residue. Residues lysine 145, aspartate 177, and 216–219 (TRYE) each bind substrate.

This sequence belongs to the class I-like SAM-binding methyltransferase superfamily. TrmB family.

The enzyme catalyses guanosine(46) in tRNA + S-adenosyl-L-methionine = N(7)-methylguanosine(46) in tRNA + S-adenosyl-L-homocysteine. It participates in tRNA modification; N(7)-methylguanine-tRNA biosynthesis. Catalyzes the formation of N(7)-methylguanine at position 46 (m7G46) in tRNA. This is tRNA (guanine-N(7)-)-methyltransferase from Novosphingobium aromaticivorans (strain ATCC 700278 / DSM 12444 / CCUG 56034 / CIP 105152 / NBRC 16084 / F199).